The primary structure comprises 130 residues: Ribosome-binding factor A (130 aa).

The protein belongs to the RbfA family. In terms of assembly, monomer. Binds 30S ribosomal subunits, but not 50S ribosomal subunits or 70S ribosomes.

The protein localises to the cytoplasm. Its function is as follows. One of several proteins that assist in the late maturation steps of the functional core of the 30S ribosomal subunit. Associates with free 30S ribosomal subunits (but not with 30S subunits that are part of 70S ribosomes or polysomes). Required for efficient processing of 16S rRNA. May interact with the 5'-terminal helix region of 16S rRNA. The protein is Ribosome-binding factor A of Prochlorococcus marinus (strain AS9601).